A 762-amino-acid polypeptide reads, in one-letter code: Endonuclease MutS2 (762 aa).

329–336 (GPNTGGKT) contacts ATP. Residues 682-757 (LNLIGKDVET…GSGVTVVYLE (76 aa)) enclose the Smr domain.

Belongs to the DNA mismatch repair MutS family. MutS2 subfamily. In terms of assembly, homodimer. Binds to stalled ribosomes, contacting rRNA.

Functionally, endonuclease that is involved in the suppression of homologous recombination and thus may have a key role in the control of bacterial genetic diversity. Its function is as follows. Acts as a ribosome collision sensor, splitting the ribosome into its 2 subunits. Detects stalled/collided 70S ribosomes which it binds and splits by an ATP-hydrolysis driven conformational change. Acts upstream of the ribosome quality control system (RQC), a ribosome-associated complex that mediates the extraction of incompletely synthesized nascent chains from stalled ribosomes and their subsequent degradation. Probably generates substrates for RQC. In Aquifex aeolicus (strain VF5), this protein is Endonuclease MutS2.